We begin with the raw amino-acid sequence, 507 residues long: uncharacterized protein (507 aa).

3 disordered regions span residues 91-162 (NEKT…KKLL), 174-255 (EKLQ…QQQQ), and 309-422 (KRKL…NYST). Positions 116-143 (DSSESDSSESESDSSESESESESNETSE) are enriched in acidic residues. Positions 144-155 (NESSSSSEPESS) are enriched in low complexity. Residues 174-193 (EKLQQEQQKQKEAQKPKEKP) are compositionally biased toward basic and acidic residues. 3 stretches are compositionally biased toward low complexity: residues 194 to 236 (QQQQ…QQIE), 243 to 255 (PQQQQQQQQQQQQ), and 313 to 350 (QSQLDNDGLANKNDNNSNNNNYNNSNNNDSNNNNTNKP). Residues 351–360 (LSKRQKKLLK) show a composition bias toward basic residues. Low complexity predominate over residues 378-409 (NNKNDNSTNDSNNNNDNNNNNKNDTNDSNNDD).

This is an uncharacterized protein from Dictyostelium discoideum (Social amoeba).